The chain runs to 408 residues: UDP-N-acetylglucosamine--dolichyl-phosphate N-acetylglucosaminephosphotransferase (408 aa).

At 1-10 (MWAFSELPMP) the chain is on the lumenal side. Residues 11-38 (LLINLIVSLLGFVATVTLIPAFRGHFIA) traverse the membrane as a helical segment. Residues 39 to 58 (ARLCGQDLNKTSRQQIPESQ) lie on the Cytoplasmic side of the membrane. UDP-N-acetyl-alpha-D-glucosamine-binding positions include 44–46 (QDL) and E56. L46 contributes to the tunicamycin A1 binding site. Residues 59 to 78 (GVISGAVFLIILFCFIPFPF) traverse the membrane as a helical segment. Over 79–91 (LNCFVKEQCKAFP) the chain is Lumenal. Residues 92–118 (HHEFVALIGALLAICCMIFLGFADDVL) form a helical membrane-spanning segment. A tunicamycin A1-binding site is contributed by N119. Residues 119–121 (NLR) are Cytoplasmic-facing. Residues 122-143 (WRHKLLLPTAASLPLLMVYFTN) traverse the membrane as a helical segment. K125 lines the dolichyl phosphate pocket. At 144–166 (FGNTTIVVPKPFRPILGLHLDLG) the chain is on the lumenal side. N-linked (GlcNAc...) asparagine glycosylation is present at N146. Residues 167–186 (ILYYVYMGLLAVFCTNAINI) traverse the membrane as a helical segment. Residue 178–186 (VFCTNAINI) participates in dolichyl phosphate binding. Residue N185 participates in tunicamycin A1 binding. N185 is a Mg(2+) binding site. Over 187–192 (LAGING) the chain is Cytoplasmic. N191 lines the UDP-N-acetyl-alpha-D-glucosamine pocket. A helical transmembrane segment spans residues 193–213 (LEAGQSLVISASIIVFNLVEL). Residues 214 to 218 (EGDCR) lie on the Lumenal side of the membrane. The helical transmembrane segment at 219 to 242 (DDHVFSLYFMIPFFFTTLGLLYHN) threads the bilayer. Residues 243–250 (WYPSRVFV) lie on the Cytoplasmic side of the membrane. A helical membrane pass occupies residues 251 to 269 (GDTFCYFAGMTFAVVGILG). D252 provides a ligand contact to tunicamycin A1. D252 is a binding site for Mg(2+). Residues 270–271 (HF) are Lumenal-facing. A helical membrane pass occupies residues 272–293 (SKTMLLFFMPQVFNFLYSLPQL). The Cytoplasmic portion of the chain corresponds to 294–375 (LHIIPCPRHR…LLLKVLGPIH (82 aa)). Residue 301–303 (RHR) coordinates UDP-N-acetyl-alpha-D-glucosamine. A tunicamycin A1-binding site is contributed by R303. Residues 376 to 400 (ERNLTLLLLLLQILGSAITFSIRYQ) form a helical membrane-spanning segment. The Lumenal portion of the chain corresponds to 401-408 (LVRLFYDV).

It belongs to the glycosyltransferase 4 family. Homodimer. The cofactor is Mg(2+).

Its subcellular location is the endoplasmic reticulum membrane. It carries out the reaction a di-trans,poly-cis-dolichyl phosphate + UDP-N-acetyl-alpha-D-glucosamine = an N-acetyl-alpha-D-glucosaminyl-diphospho-di-trans,poly-cis-dolichol + UMP. Its pathway is protein modification; protein glycosylation. Its activity is regulated as follows. Inhibited by natural nucleoside antibiotic tunicamycin, which acts as a structural analog and competitor of UDP-GlcNAc. Activated by mannosylphosphoryldolichol and phospholipids such as phosphatidylglycerol and phosphatidylcholine. Its function is as follows. UDP-N-acetylglucosamine--dolichyl-phosphate N-acetylglucosaminephosphotransferase that operates in the biosynthetic pathway of dolichol-linked oligosaccharides, the glycan precursors employed in protein asparagine (N)-glycosylation. The assembly of dolichol-linked oligosaccharides begins on the cytosolic side of the endoplasmic reticulum membrane and finishes in its lumen. The sequential addition of sugars to dolichol pyrophosphate produces dolichol-linked oligosaccharides containing fourteen sugars, including two GlcNAcs, nine mannoses and three glucoses. Once assembled, the oligosaccharide is transferred from the lipid to nascent proteins by oligosaccharyltransferases. Catalyzes the initial step of dolichol-linked oligosaccharide biosynthesis, transfering GlcNAc-1-P from cytosolic UDP-GlcNAc onto the carrier lipid dolichyl phosphate (P-dolichol), yielding GlcNAc-P-P-dolichol embedded in the cytoplasmic leaflet of the endoplasmic reticulum membrane. This Homo sapiens (Human) protein is UDP-N-acetylglucosamine--dolichyl-phosphate N-acetylglucosaminephosphotransferase.